The primary structure comprises 247 residues: tRNA pseudouridine synthase A (247 aa).

Aspartate 53 acts as the Nucleophile in catalysis. A substrate-binding site is contributed by tyrosine 112.

Belongs to the tRNA pseudouridine synthase TruA family. Homodimer.

It carries out the reaction uridine(38/39/40) in tRNA = pseudouridine(38/39/40) in tRNA. Formation of pseudouridine at positions 38, 39 and 40 in the anticodon stem and loop of transfer RNAs. The sequence is that of tRNA pseudouridine synthase A from Anaplasma marginale (strain St. Maries).